Here is a 219-residue protein sequence, read N- to C-terminus: ATP-dependent dethiobiotin synthetase BioD (219 aa).

Residue 12-17 (DLGKTH) coordinates ATP. Thr-16 serves as a coordination point for Mg(2+). Lys-37 is a catalytic residue. Ser-41 is a substrate binding site. Residues Asp-52, 115–118 (EGAG), and 175–176 (SE) contribute to the ATP site. 2 residues coordinate Mg(2+): Asp-52 and Glu-115.

It belongs to the dethiobiotin synthetase family. In terms of assembly, homodimer. Requires Mg(2+) as cofactor.

It localises to the cytoplasm. It catalyses the reaction (7R,8S)-7,8-diammoniononanoate + CO2 + ATP = (4R,5S)-dethiobiotin + ADP + phosphate + 3 H(+). The protein operates within cofactor biosynthesis; biotin biosynthesis; biotin from 7,8-diaminononanoate: step 1/2. Functionally, catalyzes a mechanistically unusual reaction, the ATP-dependent insertion of CO2 between the N7 and N8 nitrogen atoms of 7,8-diaminopelargonic acid (DAPA, also called 7,8-diammoniononanoate) to form a ureido ring. The polypeptide is ATP-dependent dethiobiotin synthetase BioD (Caulobacter vibrioides (strain ATCC 19089 / CIP 103742 / CB 15) (Caulobacter crescentus)).